The following is a 352-amino-acid chain: Selenide, water dikinase (352 aa).

Cysteine 23 is an active-site residue. ATP is bound by residues lysine 26 and 54 to 56; that span reads SRD. Aspartate 57 contacts Mg(2+). ATP is bound by residues aspartate 74, aspartate 97, and 145–147; that span reads GHS. Mg(2+) is bound at residue aspartate 97. Aspartate 233 lines the Mg(2+) pocket.

The protein belongs to the selenophosphate synthase 1 family. Class I subfamily. As to quaternary structure, homodimer. It depends on Mg(2+) as a cofactor.

It catalyses the reaction hydrogenselenide + ATP + H2O = selenophosphate + AMP + phosphate + 2 H(+). Synthesizes selenophosphate from selenide and ATP. The protein is Selenide, water dikinase of Shewanella baltica (strain OS155 / ATCC BAA-1091).